Reading from the N-terminus, the 431-residue chain is Na(+)-translocating NADH-quinone reductase subunit F (431 aa).

A helical membrane pass occupies residues 10-30; the sequence is ISIASLVFCVIGLILSGIILI. Residues 41–133 form the 2Fe-2S ferredoxin-type domain; that stretch reads CKLKINDDDS…DMCLEIEERY (93 aa). [2Fe-2S] cluster contacts are provided by C76, C82, C85, and C117. The FAD-binding FR-type domain maps to 136 to 286; it reads ASSWEGTVVS…SGPYGESFMK (151 aa).

Belongs to the NqrF family. In terms of assembly, composed of six subunits; NqrA, NqrB, NqrC, NqrD, NqrE and NqrF. It depends on [2Fe-2S] cluster as a cofactor. Requires FAD as cofactor.

The protein resides in the cell inner membrane. The catalysed reaction is a ubiquinone + n Na(+)(in) + NADH + H(+) = a ubiquinol + n Na(+)(out) + NAD(+). Functionally, NQR complex catalyzes the reduction of ubiquinone-1 to ubiquinol by two successive reactions, coupled with the transport of Na(+) ions from the cytoplasm to the periplasm. The first step is catalyzed by NqrF, which accepts electrons from NADH and reduces ubiquinone-1 to ubisemiquinone by a one-electron transfer pathway. This chain is Na(+)-translocating NADH-quinone reductase subunit F, found in Chlamydia caviae (strain ATCC VR-813 / DSM 19441 / 03DC25 / GPIC) (Chlamydophila caviae).